The sequence spans 152 residues: Xanthine-guanine phosphoribosyltransferase (152 aa).

Residues 37–38 (RG), R69, and 88–96 (DDLVDSGDT) each bind 5-phospho-alpha-D-ribose 1-diphosphate. A GMP-binding site is contributed by R69. D89 serves as a coordination point for Mg(2+). 2 residues coordinate guanine: D92 and I135. Xanthine contacts are provided by D92 and I135. GMP-binding positions include 92 to 96 (DSGDT) and 134 to 135 (WI).

It belongs to the purine/pyrimidine phosphoribosyltransferase family. XGPT subfamily. In terms of assembly, homotetramer. It depends on Mg(2+) as a cofactor.

The protein localises to the cell inner membrane. It carries out the reaction GMP + diphosphate = guanine + 5-phospho-alpha-D-ribose 1-diphosphate. The catalysed reaction is XMP + diphosphate = xanthine + 5-phospho-alpha-D-ribose 1-diphosphate. It catalyses the reaction IMP + diphosphate = hypoxanthine + 5-phospho-alpha-D-ribose 1-diphosphate. It participates in purine metabolism; GMP biosynthesis via salvage pathway; GMP from guanine: step 1/1. It functions in the pathway purine metabolism; XMP biosynthesis via salvage pathway; XMP from xanthine: step 1/1. Its function is as follows. Purine salvage pathway enzyme that catalyzes the transfer of the ribosyl-5-phosphate group from 5-phospho-alpha-D-ribose 1-diphosphate (PRPP) to the N9 position of the 6-oxopurines guanine and xanthine to form the corresponding ribonucleotides GMP (guanosine 5'-monophosphate) and XMP (xanthosine 5'-monophosphate), with the release of PPi. To a lesser extent, also acts on hypoxanthine. This Aliivibrio salmonicida (strain LFI1238) (Vibrio salmonicida (strain LFI1238)) protein is Xanthine-guanine phosphoribosyltransferase.